A 197-amino-acid polypeptide reads, in one-letter code: Thymidylate kinase (197 aa).

Residue 7–14 (GIDGSGKS) coordinates ATP.

This sequence belongs to the thymidylate kinase family.

It catalyses the reaction dTMP + ATP = dTDP + ADP. In terms of biological role, phosphorylation of dTMP to form dTDP in both de novo and salvage pathways of dTTP synthesis. The polypeptide is Thymidylate kinase (Thermotoga petrophila (strain ATCC BAA-488 / DSM 13995 / JCM 10881 / RKU-1)).